Consider the following 594-residue polypeptide: tRNA (uracil-O(2)-)-methyltransferase (594 aa).

Belongs to the TRM44 family.

The protein resides in the cytoplasm. The catalysed reaction is uridine(44) in tRNA(Ser) + S-adenosyl-L-methionine = 2'-O-methyluridine(44) in tRNA(Ser) + S-adenosyl-L-homocysteine + H(+). Functionally, probable adenosyl-L-methionine (AdoMet)-dependent tRNA (uracil-O(2)-)-methyltransferase. In Debaryomyces hansenii (strain ATCC 36239 / CBS 767 / BCRC 21394 / JCM 1990 / NBRC 0083 / IGC 2968) (Yeast), this protein is tRNA (uracil-O(2)-)-methyltransferase (TRM44).